Reading from the N-terminus, the 178-residue chain is MLPEIGAAELLIIAAVALIVVGPKDLPLLMRRIGQFMAKVRSMASEFRASFDDMARQSELDDLRKEVEAMRRGQFADMSIADGAMTEAAGDIEKSLAGVGVQLHSPTGYENTVEPPPPEPEPQPAAEPAPKPARKPRAAKPKAAAAPKAAAKPKAAAKPKPKPKTPGLKARKTAGSAE.

Residues 2 to 22 form a helical membrane-spanning segment; it reads LPEIGAAELLIIAAVALIVVG. Residues 104-178 are disordered; the sequence is HSPTGYENTV…KARKTAGSAE (75 aa). Over residues 114–131 the composition is skewed to pro residues; sequence EPPPPEPEPQPAAEPAPK. Over residues 141 to 154 the composition is skewed to low complexity; that stretch reads PKAAAAPKAAAKPK.

This sequence belongs to the TatB family. The Tat system comprises two distinct complexes: a TatABC complex, containing multiple copies of TatA, TatB and TatC subunits, and a separate TatA complex, containing only TatA subunits. Substrates initially bind to the TatABC complex, which probably triggers association of the separate TatA complex to form the active translocon.

It localises to the cell inner membrane. In terms of biological role, part of the twin-arginine translocation (Tat) system that transports large folded proteins containing a characteristic twin-arginine motif in their signal peptide across membranes. Together with TatC, TatB is part of a receptor directly interacting with Tat signal peptides. TatB may form an oligomeric binding site that transiently accommodates folded Tat precursor proteins before their translocation. This is Sec-independent protein translocase protein TatB from Phenylobacterium zucineum (strain HLK1).